The primary structure comprises 132 residues: Histone H2A.1 (132 aa).

Belongs to the histone H2A family. In terms of assembly, the nucleosome is a histone octamer containing two molecules each of H2A, H2B, H3 and H4 assembled in one H3-H4 heterotetramer and two H2A-H2B heterodimers. The octamer wraps approximately 147 bp of DNA.

Its subcellular location is the nucleus. It localises to the chromosome. Core component of nucleosome. Nucleosomes wrap and compact DNA into chromatin, limiting DNA accessibility to the cellular machineries which require DNA as a template. Histones thereby play a central role in transcription regulation, DNA repair, DNA replication and chromosomal stability. DNA accessibility is regulated via a complex set of post-translational modifications of histones, also called histone code, and nucleosome remodeling. The protein is Histone H2A.1 of Leishmania infantum.